Here is a 513-residue protein sequence, read N- to C-terminus: Serine/threonine-protein kinase PBL27 (513 aa).

Residues 1 to 61 form a disordered region; sequence MSGCLPCFGS…KKELTAPKEG (61 aa). 2 S-palmitoyl cysteine lipidation sites follow: C4 and C7. Composition is skewed to basic and acidic residues over residues 15–27 and 38–57; these read AASK…ELSA and ISLD…ELTA. The Protein kinase domain maps to 83 to 360; that stretch reads FRPECLLGEG…GDVVTALTYL (278 aa). Residues 89–97 and K112 each bind ATP; that span reads LGEGGFGRV. The Proton acceptor role is filled by D210. At S244 the chain carries Phosphoserine; by CERK1. 2 positions are modified to phosphothreonine; by CERK1: T245 and T250. A compositionally biased stretch (polar residues) spans 365 to 378; sequence FDPNAPSGQNSRSG. The disordered stretch occupies residues 365–513; the sequence is FDPNAPSGQN…GPGSFDSTND (149 aa). S392 and S401 each carry phosphoserine. The span at 417 to 428 shows a compositional bias: basic and acidic residues; sequence NSPDYRRRDMVR. Positions 434-446 are enriched in gly residues; it reads SEGGSETGGGSGR. Polar residues predominate over residues 456-473; that stretch reads QESQRGSPASVGRSSRGT. Basic and acidic residues predominate over residues 475-486; that stretch reads RNRDLDRERAVA. The span at 504–513 shows a compositional bias: polar residues; it reads GPGSFDSTND.

It belongs to the protein kinase superfamily. Ser/Thr protein kinase family. In terms of assembly, interacts with CERK1 (preferentially unphosphorylated) at the plasma membrane. Binds to MAPKKK5 at the plasma membrane; disassociation is induced by chitin perception by the CERK1 complex. Also associates with MAPKKK3. In terms of processing, phosphorylated by CERK1 upon elicitation by chitin. Palmitoylation at Cys-4 and Cys-7 are required for plasma membrane location.

Its subcellular location is the cell membrane. The enzyme catalyses L-seryl-[protein] + ATP = O-phospho-L-seryl-[protein] + ADP + H(+). It catalyses the reaction L-threonyl-[protein] + ATP = O-phospho-L-threonyl-[protein] + ADP + H(+). Its function is as follows. Receptor-like cytoplasmic kinase involved in the transduction of signal between the host cell surface chitin receptor complex CERK1-LYK5 and the intracellular MAPKKK5-dependent mitogen-activated protein kinase (MAPK) cascade that leads to chitin-induced immunity. Phosphorylates and activates MAPKKK5 when phosphorylated by CERK1 after elicitation by chitin. The protein is Serine/threonine-protein kinase PBL27 of Arabidopsis thaliana (Mouse-ear cress).